We begin with the raw amino-acid sequence, 166 residues long: Protein UL5 (166 aa).

Belongs to the RL11 family. In terms of assembly, interacts with host IQGAP1.

It is found in the host cytoplasm. Functionally, may play a role in rearrangement of cellular cytoskeleton towards an efficient viral assembly and spreading. The chain is Protein UL5 (UL5) from Human cytomegalovirus (strain AD169) (HHV-5).